The following is a 285-amino-acid chain: HTH-type transcriptional regulator MurR (285 aa).

Residues 1 to 77 (MLYLTKISNA…MALIGEYSAS (77 aa)) enclose the HTH rpiR-type domain. The H-T-H motif DNA-binding region spans 37–56 (SRQMAKQLGISQSSIVKFAQ). An SIS domain is found at 128–268 (IIEVISKAPF…FVGLVQLNDV (141 aa)).

As to quaternary structure, homotetramer.

It participates in amino-sugar metabolism; N-acetylmuramate degradation [regulation]. Represses the expression of the murPQ operon involved in the uptake and degradation of N-acetylmuramic acid (MurNAc). Binds to two adjacent inverted repeats within the operator region. MurNAc 6-phosphate, the substrate of MurQ, is the specific inducer that weakens binding of MurR to the operator. The sequence is that of HTH-type transcriptional regulator MurR from Escherichia coli (strain K12 / MC4100 / BW2952).